The chain runs to 337 residues: DNA-directed RNA polymerase subunit alpha (337 aa).

Residues 1–232 (MVREEVRVCT…IDLFIPFLHA (232 aa)) are alpha N-terminal domain (alpha-NTD). The tract at residues 266-337 (EISFQCIFID…FAIDLPKNKF (72 aa)) is alpha C-terminal domain (alpha-CTD).

This sequence belongs to the RNA polymerase alpha chain family. As to quaternary structure, in plastids the minimal PEP RNA polymerase catalytic core is composed of four subunits: alpha, beta, beta', and beta''. When a (nuclear-encoded) sigma factor is associated with the core the holoenzyme is formed, which can initiate transcription.

It localises to the plastid. It is found in the chloroplast. It catalyses the reaction RNA(n) + a ribonucleoside 5'-triphosphate = RNA(n+1) + diphosphate. In terms of biological role, DNA-dependent RNA polymerase catalyzes the transcription of DNA into RNA using the four ribonucleoside triphosphates as substrates. The polypeptide is DNA-directed RNA polymerase subunit alpha (Buxus microphylla (Littleleaf boxwood)).